A 177-amino-acid chain; its full sequence is Antigen TyF1 (177 aa).

This sequence belongs to the Dps family. Homodecamer.

In Treponema pallidum subsp. pertenue (Yaws treponeme), this protein is Antigen TyF1.